We begin with the raw amino-acid sequence, 156 residues long: Large ribosomal subunit protein uL11 (156 aa).

A disordered region spans residues 1–20 (MAQSVKTMVEGGKATTGPPI).

It belongs to the universal ribosomal protein uL11 family. Part of the ribosomal stalk of the 50S ribosomal subunit. Interacts with L10 and the large rRNA to form the base of the stalk. L10 forms an elongated spine to which L12 dimers bind in a sequential fashion forming a multimeric L10(L12)X complex.

In terms of biological role, forms part of the ribosomal stalk which helps the ribosome interact with GTP-bound translation factors. In Thermoplasma acidophilum (strain ATCC 25905 / DSM 1728 / JCM 9062 / NBRC 15155 / AMRC-C165), this protein is Large ribosomal subunit protein uL11.